Reading from the N-terminus, the 51-residue chain is Protein I177L (51 aa).

Asn11 carries N-linked (GlcNAc...) asparagine; by host glycosylation.

Belongs to the asfivirus I177L family.

The protein resides in the virion. This Ornithodoros (relapsing fever ticks) protein is Protein I177L.